The chain runs to 208 residues: Small ribosomal subunit protein uS4 (208 aa).

Residues 98-158 (RRLDNVVYRL…EKSRGQLRIK (61 aa)) form the S4 RNA-binding domain.

It belongs to the universal ribosomal protein uS4 family. In terms of assembly, part of the 30S ribosomal subunit. Contacts protein S5. The interaction surface between S4 and S5 is involved in control of translational fidelity.

In terms of biological role, one of the primary rRNA binding proteins, it binds directly to 16S rRNA where it nucleates assembly of the body of the 30S subunit. Its function is as follows. With S5 and S12 plays an important role in translational accuracy. This is Small ribosomal subunit protein uS4 from Magnetococcus marinus (strain ATCC BAA-1437 / JCM 17883 / MC-1).